The sequence spans 318 residues: Acetyl-coenzyme A carboxylase carboxyl transferase subunit alpha (318 aa).

Residues 39–292 (LTDKSEKQLR…GDSIAAELPD (254 aa)) form the CoA carboxyltransferase C-terminal domain.

This sequence belongs to the AccA family. Acetyl-CoA carboxylase is a heterohexamer composed of biotin carboxyl carrier protein (AccB), biotin carboxylase (AccC) and two subunits each of ACCase subunit alpha (AccA) and ACCase subunit beta (AccD).

It is found in the cytoplasm. It catalyses the reaction N(6)-carboxybiotinyl-L-lysyl-[protein] + acetyl-CoA = N(6)-biotinyl-L-lysyl-[protein] + malonyl-CoA. Its pathway is lipid metabolism; malonyl-CoA biosynthesis; malonyl-CoA from acetyl-CoA: step 1/1. Functionally, component of the acetyl coenzyme A carboxylase (ACC) complex. First, biotin carboxylase catalyzes the carboxylation of biotin on its carrier protein (BCCP) and then the CO(2) group is transferred by the carboxyltransferase to acetyl-CoA to form malonyl-CoA. The protein is Acetyl-coenzyme A carboxylase carboxyl transferase subunit alpha of Gluconacetobacter diazotrophicus (strain ATCC 49037 / DSM 5601 / CCUG 37298 / CIP 103539 / LMG 7603 / PAl5).